We begin with the raw amino-acid sequence, 224 residues long: ATP synthase subunit a (224 aa).

The next 6 helical transmembrane spans lie at 17–37 (LSLN…IYWL), 72–92 (IFIS…FPYI), 99–119 (LTLT…YGWI), 125–145 (MFAH…MVCI), 155–175 (GTLA…LTLL), and 184–204 (YLLV…ESAV).

Belongs to the ATPase A chain family. F-type ATPases have 2 components, CF(1) - the catalytic core - and CF(0) - the membrane proton channel. CF(1) has five subunits: alpha(3), beta(3), gamma(1), delta(1), epsilon(1). CF(0) has three main subunits: a, b and c.

The protein resides in the mitochondrion inner membrane. In terms of biological role, mitochondrial membrane ATP synthase (F(1)F(0) ATP synthase or Complex V) produces ATP from ADP in the presence of a proton gradient across the membrane which is generated by electron transport complexes of the respiratory chain. F-type ATPases consist of two structural domains, F(1) - containing the extramembraneous catalytic core and F(0) - containing the membrane proton channel, linked together by a central stalk and a peripheral stalk. During catalysis, ATP synthesis in the catalytic domain of F(1) is coupled via a rotary mechanism of the central stalk subunits to proton translocation. Key component of the proton channel; it may play a direct role in the translocation of protons across the membrane. This chain is ATP synthase subunit a (mt:ATPase6), found in Drosophila yakuba (Fruit fly).